The chain runs to 658 residues: Interferon-induced GTP-binding protein Mx1 (658 aa).

At Met1 the chain carries N-acetylmethionine. Positions 1–20 (MVNSKGKITDSDPGSSHLLL) are disordered. A Dynamin-type G domain is found at 65–338 (DLALPAIAVI…LITHICKTLP (274 aa)). The G1 motif stretch occupies residues 75–82 (GDQSSGKS). 75 to 82 (GDQSSGKS) contributes to the GTP binding site. The segment at 100 to 102 (VTR) is G2 motif. A G3 motif region spans residues 176–179 (DLPG). GTP-binding positions include 176–180 (DLPGI) and 245–248 (TKPD). The interval 245–248 (TKPD) is G4 motif. The interval 277 to 280 (KCRG) is G5 motif. A bundle signaling element (BSE) region spans residues 339-364 (LLENQIKENYEKITEELQKYGSDVPE). The tract at residues 364 to 531 (EEEHEKMFFL…HFQMEQIVYC (168 aa)) is middle domain. Positions 365 to 628 (EEHEKMFFLI…KDTHNWLLKE (264 aa)) are stalk. Residues 551-554 (KDRK) are critical for lipid-binding. The GED domain occupies 570–658 (LSDIFEHLLA…ARRRLAKFPG (89 aa)).

Belongs to the TRAFAC class dynamin-like GTPase superfamily. Dynamin/Fzo/YdjA family. In terms of assembly, homooligomer. Oligomerizes into multimeric filamentous or ring-like structures by virtue of its stalk domain. Oligomerization is critical for GTPase activity, protein stability, and recognition of viral target structures. Interacts with TRPC1, TRPC3, TRPC4, TRPC5, TRPC6 and TRPC7. Interacts with HSPA5. Interacts with TUBB/TUBB5. Interacts with DDX39A and DDX39B. In terms of processing, ISGylated.

Its subcellular location is the cytoplasm. The protein localises to the endoplasmic reticulum membrane. The protein resides in the perinuclear region. Functionally, interferon-induced dynamin-like GTPase with antiviral activity. The sequence is that of Interferon-induced GTP-binding protein Mx1 (MX1) from Eumetopias jubatus (Steller sea lion).